Here is a 298-residue protein sequence, read N- to C-terminus: uncharacterized protein (298 aa).

8 helical membrane passes run 5–25 (SLATLFALLILATLINRFLLW), 52–72 (VISGPRWMTLTFFALISFLAL), 105–125 (LFLLFIPLAGFLILATGQVLV), 138–158 (IFWGWIMTVFALSHAAWLLML), 163–183 (IQGGALLVLFLLALTESNDIA), 208–228 (GLMGGVITIMIASLIIGPLLT), 236–256 (LLAGLLIGISGFCGDVVMSAI), and 273–293 (GGLLDRIDSLIFTAPVFFYFI).

Belongs to the CDS family.

The protein localises to the cell membrane. This is an uncharacterized protein from Escherichia coli (strain K12).